A 228-amino-acid polypeptide reads, in one-letter code: Ribonuclease 3 (228 aa).

Positions leucine 5–glycine 128 constitute an RNase III domain. Residue glutamate 41 coordinates Mg(2+). Residue aspartate 45 is part of the active site. Mg(2+) contacts are provided by aspartate 114 and glutamate 117. The active site involves glutamate 117. The DRBM domain occupies aspartate 155–glutamine 225.

This sequence belongs to the ribonuclease III family. Homodimer. Requires Mg(2+) as cofactor.

It is found in the cytoplasm. The enzyme catalyses Endonucleolytic cleavage to 5'-phosphomonoester.. Functionally, digests double-stranded RNA. Involved in the processing of primary rRNA transcript to yield the immediate precursors to the large and small rRNAs (23S and 16S). Processes some mRNAs, and tRNAs when they are encoded in the rRNA operon. Processes pre-crRNA and tracrRNA of type II CRISPR loci if present in the organism. The polypeptide is Ribonuclease 3 (Alcanivorax borkumensis (strain ATCC 700651 / DSM 11573 / NCIMB 13689 / SK2)).